Reading from the N-terminus, the 950-residue chain is MORC family CW-type zinc finger protein 1 (950 aa).

Residues 281–342 (KGKFKTEVQK…TKHKSLRQKQ (62 aa)) are a coiled coil. Residues 465-530 (SLESLQWRRR…SCNQIERLPS (66 aa)) form a CW-type zinc finger. The Zn(2+) site is built by Cys485, Cys488, Cys511, and Cys522. Disordered stretches follow at residues 532–551 (PLGT…RQLQ) and 679–700 (KKQQ…ASSR). Over residues 541-550 (PSKDERERQL) the composition is skewed to basic and acidic residues. Residues 885–916 (LGQCELKRKRTEEKLSDLRAKLALLLQKLQLG) are a coiled coil.

As to expression, expressed at very low level in male germ cells.

The protein localises to the nucleus. Its function is as follows. Required for spermatogenesis. Essential for de novo DNA methylation and silencing of transposable elements in the male embryonic germ cells. Not required for piRNA biosynthesis. The chain is MORC family CW-type zinc finger protein 1 from Mus musculus (Mouse).